A 123-amino-acid chain; its full sequence is Large ribosomal subunit protein uL14 (123 aa).

This sequence belongs to the universal ribosomal protein uL14 family. Part of the 50S ribosomal subunit. Forms a cluster with proteins L3 and L19. In the 70S ribosome, L14 and L19 interact and together make contacts with the 16S rRNA in bridges B5 and B8.

Functionally, binds to 23S rRNA. Forms part of two intersubunit bridges in the 70S ribosome. This Wigglesworthia glossinidia brevipalpis protein is Large ribosomal subunit protein uL14.